Here is a 1135-residue protein sequence, read N- to C-terminus: Vinculin (1135 aa).

The segment at 2–835 (PVFHTRTIES…GAVAKVREAF (834 aa)) is N-terminal globular head. Tyr100 carries the post-translational modification Phosphotyrosine. The talin-interaction stretch occupies residues 168–208 (MTKMAKMIDERQQELTHQEHRVMLVNSMNTVKELLPVLISA). Repeat copies occupy residues 259-369 (ASKD…KVEN), 370-479 (AARK…KTNR), and 480-589 (AVAN…RMQE). The tract at residues 259–589 (ASKDTEAMKR…LKDLKARMQE (331 aa)) is 3 X 112 AA tandem repeats. Phosphotyrosine occurs at positions 537 and 822. The linker (Pro-rich) stretch occupies residues 836–878 (QPQEPDFPPPPPDLEHLHLTDELAPPKPPLPEGEVPPPRPPPP). Positions 837 to 888 (PQEPDFPPPPPDLEHLHLTDELAPPKPPLPEGEVPPPRPPPPEEKDEEFPEQ) are disordered. A compositionally biased stretch (pro residues) spans 860–876 (PPKPPLPEGEVPPPRPP). A C-terminal tail region spans residues 879–1135 (EEKDEEFPEQ…RWVRKTPWYQ (257 aa)). 2 facilitates phospholipid membrane insertion regions span residues 1004-1047 (RLVR…KRIR) and 1121-1135 (AGFTLRWVRKTPWYQ). At Tyr1134 the chain carries Phosphotyrosine; by SRC-type Tyr-kinases.

This sequence belongs to the vinculin/alpha-catenin family. In terms of assembly, exhibits self-association properties. Interacts with APBB1IP, NRAP and TLN1. Interacts with CTNNB1 and this interaction is necessary for its localization to the cell-cell junctions and for its function in regulating cell surface expression of E-cadherin. In terms of processing, phosphorylated; on serines, threonines and tyrosines. Phosphorylation on Tyr-1134 in activated platelets affects head-tail interactions and cell spreading but has no effect on actin binding nor on localization to focal adhesion plaques. Acetylated; mainly by myristic acid but also by a small amount of palmitic acid. As to expression, isoform Metavinculin is muscle-specific.

The protein localises to the cell membrane. It is found in the cell junction. Its subcellular location is the adherens junction. The protein resides in the focal adhesion. It localises to the cytoplasm. The protein localises to the cytoskeleton. It is found in the sarcolemma. Its subcellular location is the cell projection. The protein resides in the podosome. In terms of biological role, actin filament (F-actin)-binding protein involved in cell-matrix adhesion and cell-cell adhesion. Regulates cell-surface E-cadherin expression and potentiates mechanosensing by the E-cadherin complex. May also play important roles in cell morphology and locomotion. The protein is Vinculin (VCL) of Gallus gallus (Chicken).